The primary structure comprises 314 residues: 3'-5' exoribonuclease YhaM (314 aa).

Positions 14–90 form a DNA-binding region, OB; it reads VDLYLLIKSS…QLKLRNIRPA (77 aa). Residues 163–279 enclose the HD domain; the sequence is HVVSMLNLAK…LHYIDNLDAK (117 aa).

The protein belongs to the YhaM family.

Its function is as follows. Shows a 3'-5' exoribonuclease activity. The polypeptide is 3'-5' exoribonuclease YhaM (Bacillus licheniformis (strain ATCC 14580 / DSM 13 / JCM 2505 / CCUG 7422 / NBRC 12200 / NCIMB 9375 / NCTC 10341 / NRRL NRS-1264 / Gibson 46)).